The following is a 734-amino-acid chain: NAD(P)H-quinone oxidoreductase subunit 5, chloroplastic (734 aa).

12 helical membrane-spanning segments follow: residues 9–29 (WIIP…LFFF), 40–60 (YAII…DLLW), 89–109 (IDPL…TVMI), 121–140 (YVRF…GLVI), 144–166 (LIQI…GFWF), 185–205 (GDFG…SFKF), 219–239 (HEVS…GPVA), 258–278 (TPIS…FLVA), 289–311 (LVMS…VALA), 318–338 (VLAY…GIGS), 395–415 (GTTF…ACFW), and 425–445 (WLYF…TGFY). Residues 512–534 (DKNVKNSVSTQSSREEYSPHPKE) form a disordered region. Residues 524–534 (SREEYSPHPKE) show a composition bias toward basic and acidic residues. 3 consecutive transmembrane segments (helical) span residues 539–559 (MLFP…IGVP), 601–621 (VGTA…IPFF), and 707–727 (ISYY…VVIN).

Belongs to the complex I subunit 5 family. NDH is composed of at least 16 different subunits, 5 of which are encoded in the nucleus.

It is found in the plastid. It localises to the chloroplast thylakoid membrane. The enzyme catalyses a plastoquinone + NADH + (n+1) H(+)(in) = a plastoquinol + NAD(+) + n H(+)(out). The catalysed reaction is a plastoquinone + NADPH + (n+1) H(+)(in) = a plastoquinol + NADP(+) + n H(+)(out). In terms of biological role, NDH shuttles electrons from NAD(P)H:plastoquinone, via FMN and iron-sulfur (Fe-S) centers, to quinones in the photosynthetic chain and possibly in a chloroplast respiratory chain. The immediate electron acceptor for the enzyme in this species is believed to be plastoquinone. Couples the redox reaction to proton translocation, and thus conserves the redox energy in a proton gradient. In Huperzia lucidula (Shining clubmoss), this protein is NAD(P)H-quinone oxidoreductase subunit 5, chloroplastic (ndhF).